We begin with the raw amino-acid sequence, 138 residues long: MRFSAATVSALAMALTVAAAPGNTAKEALAKRTDDLTVADAQNICGKDLSVNCCNQVDASTNNNDNSGSGILSGILGGVLGNGGLKLTDGCSSIGVGIANDLLNSQCKQSVACCKTDGNTASGLVAVQLPCIPISGLL.

The N-terminal stretch at 1 to 19 (MRFSAATVSALAMALTVAA) is a signal peptide. 4 disulfides stabilise this stretch: Cys45/Cys113, Cys53/Cys107, Cys54/Cys91, and Cys114/Cys131.

Belongs to the fungal hydrophobin family. As to quaternary structure, interacts with the lipid droplet coating protein Cap20.

The protein resides in the secreted. The protein localises to the lipid droplet. In terms of biological role, aerial growth, conidiation, and dispersal of filamentous fungi in the environment rely upon a capability of their secreting small amphipathic proteins called hydrophobins (HPBs) with low sequence identity. Class I can self-assemble into an outermost layer of rodlet bundles on aerial cell surfaces, conferring cellular hydrophobicity that supports fungal growth, development and dispersal; whereas Class II form highly ordered films at water-air interfaces through intermolecular interactions but contribute nothing to the rodlet structure. Hydr1 is a class I hydrophobin involved in spore germination, appressorium formation, but not in the formation of the rodlet layer of conidia. Responsible for the full virulence on rubber tree leaves. The polypeptide is Class I hydrophobin 1 (Colletotrichum siamense (Anthracnose fungus)).